The primary structure comprises 569 residues: Beta-galactoside-specific lectin 3 (569 aa).

The first 33 residues, 1-33 (MNAVMDSRGAWVSCFLILGLVFGATVKAETKFS), serve as a signal peptide directing secretion. Glu198 is a catalytic residue. Cystine bridges form between Cys280–Cys311, Cys327–Cys346, and Cys370–Cys387. Residues 288 to 307 (EVRYWPLVIRPVLENSGAVD) constitute a propeptide, connecting peptide. The 128-residue stretch at 314 to 441 (SEPTVRIVGR…YSLGQGWLAG (128 aa)) folds into the Ricin B-type lectin 1 domain. Residue 329–331 (DVR) coordinates D-galactose. Asn402 and Asn442 each carry an N-linked (GlcNAc...) asparagine glycan. The region spanning 445–568 (APREVTIYGF…GNPNQMWLPV (124 aa)) is the Ricin B-type lectin 2 domain. 2 cysteine pairs are disulfide-bonded: Cys458/Cys471 and Cys497/Cys514. D-galactose is bound at residue 541 to 543 (DVA).

The protein belongs to the ribosome-inactivating protein family. Type 2 RIP subfamily. In terms of assembly, disulfide-linked dimer of A and B chains.

It catalyses the reaction Endohydrolysis of the N-glycosidic bond at one specific adenosine on the 28S rRNA.. In terms of biological role, the A chain is responsible for inhibiting protein synthesis through the catalytic inactivation of 60S ribosomal subunits by removing adenine from position 4,324 of 28S rRNA. The B chain binds to cell receptors and probably facilitates the entry into the cell of the A chain; B chains are also responsible for cell agglutination (lectin activity). Inhibits growth of the human tumor cell line Molt4. This is Beta-galactoside-specific lectin 3 from Viscum album (European mistletoe).